The chain runs to 235 residues: Small ribosomal subunit protein uS2 (235 aa).

The protein belongs to the universal ribosomal protein uS2 family.

This is Small ribosomal subunit protein uS2 from Caldanaerobacter subterraneus subsp. tengcongensis (strain DSM 15242 / JCM 11007 / NBRC 100824 / MB4) (Thermoanaerobacter tengcongensis).